The following is a 164-amino-acid chain: NADPH-dependent 7-cyano-7-deazaguanine reductase (164 aa).

The active-site Thioimide intermediate is the C55. Catalysis depends on D62, which acts as the Proton donor. Residues V77 to S79 and H96 to E97 contribute to the substrate site.

This sequence belongs to the GTP cyclohydrolase I family. QueF type 1 subfamily.

The protein localises to the cytoplasm. The catalysed reaction is 7-aminomethyl-7-carbaguanine + 2 NADP(+) = 7-cyano-7-deazaguanine + 2 NADPH + 3 H(+). Its pathway is tRNA modification; tRNA-queuosine biosynthesis. In terms of biological role, catalyzes the NADPH-dependent reduction of 7-cyano-7-deazaguanine (preQ0) to 7-aminomethyl-7-deazaguanine (preQ1). In Bacillus velezensis (strain DSM 23117 / BGSC 10A6 / LMG 26770 / FZB42) (Bacillus amyloliquefaciens subsp. plantarum), this protein is NADPH-dependent 7-cyano-7-deazaguanine reductase.